The following is a 228-amino-acid chain: Cytidylate kinase (228 aa).

Residue 17-25 participates in ATP binding; the sequence is GPSASGKGT.

This sequence belongs to the cytidylate kinase family. Type 1 subfamily.

The protein localises to the cytoplasm. The enzyme catalyses CMP + ATP = CDP + ADP. It catalyses the reaction dCMP + ATP = dCDP + ADP. The sequence is that of Cytidylate kinase from Paraburkholderia phytofirmans (strain DSM 17436 / LMG 22146 / PsJN) (Burkholderia phytofirmans).